A 32-amino-acid polypeptide reads, in one-letter code: Photosystem I reaction center subunit XII (32 aa).

Residues 3-23 (SISDGQIVVALISAFIIVILA) form a helical membrane-spanning segment.

This sequence belongs to the PsaM family.

Its subcellular location is the plastid. The protein localises to the chloroplast thylakoid membrane. This chain is Photosystem I reaction center subunit XII, found in Anthoceros angustus (Hornwort).